A 641-amino-acid polypeptide reads, in one-letter code: Uromodulin (641 aa).

A signal peptide spans 1–24; the sequence is MGQPPLTWMLMVVVASWFITTAAT. The N-linked (GlcNAc...) asparagine glycan is linked to Asn25. The 37-residue stretch at 28–64 folds into the EGF-like 1 domain; it reads EARWCSECHSNATCTEDEAVTTCTCQEGFTGDGLTCV. Intrachain disulfides connect Cys32-Cys41, Cys35-Cys50, Cys52-Cys63, Cys69-Cys83, Cys77-Cys92, Cys94-Cys106, Cys112-Cys126, Cys120-Cys135, Cys137-Cys148, Cys150-Cys161, Cys155-Cys170, Cys174-Cys267, Cys195-Cys282, Cys217-Cys255, Cys223-Cys287, Cys248-Cys256, Cys297-Cys306, Cys300-Cys315, Cys317-Cys347, Cys335-Cys425, and Cys366-Cys389. The EGF-like 2; calcium-binding domain maps to 65–107; sequence DLDECAIPGAHNCSANSSCVNTPGSFSCVCPEGFRLSPGLGCT. Asn76 carries an N-linked (GlcNAc...) asparagine glycan. An EGF-like 3; calcium-binding domain is found at 108 to 149; the sequence is DVDECAEPGLSHCHALATCVNVVGNYLCVCPAGYRGDGWHCE. Positions 150–171 are beta hairpin; it reads CSPGSCGPGLDCVPEGDALVCA. Positions 172-291 are D10C; sequence DPCQAHRTLD…CHLAYCTDPS (120 aa). An N-linked (GlcNAc...) asparagine glycan is attached at Asn232. The N-linked (GlcNAc...) asparagine glycan is linked to Asn275. In terms of domain architecture, EGF-like 4 spans 292-323; sequence SVEGTCEECSIDEDCKSDNGRWHCQCKQDFNI. The N-linked (GlcNAc...) asparagine glycan is linked to Asn322. The tract at residues 334 to 429 is ZP-N; that stretch reads ECGANDMKVS…KINFACSYPL (96 aa). The 256-residue stretch at 334–589 folds into the ZP domain; that stretch reads ECGANDMKVS…PTCSGTRFRS (256 aa). Positions 430–453 are flexible ZP-N/ZP-C linker; important for secretion and polymerization into filaments; it reads DMKVSLKTSLQPVVSALNITVGGT. An N-linked (GlcNAc...) asparagine glycan is attached at Asn447. Positions 454–464 are internal hydrophobic patch (IHP); it reads GMFTVRMALFQ. The interval 454 to 589 is ZP-C; that stretch reads GMFTVRMALF…PTCSGTRFRS (136 aa). Disulfide bonds link Cys506/Cys566, Cys527/Cys582, and Cys571/Cys578. An essential for cleavage by HPN region spans residues 586 to 589; it reads RFRS. An external hydrophobic patch (EHP); regulates polymerization into filaments region spans residues 598-606; it reads VLNLGPITR. Ser614 is lipidated: GPI-anchor amidated serine. The propeptide at 615–641 is removed in mature form; sequence RAAFSSLGLLKVWLPLLLSATLTLTFQ.

In terms of assembly, homodimer that then polymerizes into long filaments. The filaments can additionally assemble laterally to form a sheet. The filaments consist of a zigzag-shaped backbone with laterally protruding arms which interact with bacterial adhesin fimH. Two fimH molecules can bind to a single UMOD monomer. In terms of processing, N-glycosylated. Proteolytically cleaved at a conserved C-terminal proteolytic cleavage site to generate the secreted form found in urine. This cleavage is catalyzed by HPN.

Its subcellular location is the apical cell membrane. The protein resides in the basolateral cell membrane. It is found in the cell projection. The protein localises to the cilium membrane. It localises to the secreted. Functionally, functions in biogenesis and organization of the apical membrane of epithelial cells of the thick ascending limb of Henle's loop (TALH), where it promotes formation of complex filamentous gel-like structure that may play a role in the water barrier permeability. May serve as a receptor for binding and endocytosis of cytokines (IL-1, IL-2) and TNF. Facilitates neutrophil migration across renal epithelia. In the urine, may contribute to colloid osmotic pressure, retards passage of positively charged electrolytes, and inhibits formation of liquid containing supersaturated salts and subsequent formation of salt crystals. Protects against urinary tract infections by binding to type 1 fimbriated E.coli. Binds to bacterial adhesin fimH which mediates the stable formation of bacterial aggregates, prevents the binding of E.coli to uroplakins UPK1A and UPK1B which act as urothelial receptors for type I fimbriae, and allows for pathogen clearance through micturation. Also promotes aggregation of other bacteria including K.pneumoniae, P.aeruginosa and S.mitis and so may also protect against other uropathogens. The sequence is that of Uromodulin (UMOD) from Pongo abelii (Sumatran orangutan).